We begin with the raw amino-acid sequence, 336 residues long: Galactinol synthase 6 (336 aa).

Lys106 is a catalytic residue. Mn(2+)-binding residues include Asp122, Asp124, and His260.

It belongs to the glycosyltransferase 8 family. Galactosyltransferase subfamily. Requires a divalent metal cation as cofactor.

The protein localises to the cytoplasm. It carries out the reaction myo-inositol + UDP-alpha-D-galactose = alpha-D-galactosyl-(1-&gt;3)-1D-myo-inositol + UDP + H(+). Functionally, galactinol synthase involved in the biosynthesis of raffinose family oligosaccharides (RFOs) that function as osmoprotectants. May promote plant stress tolerance. This is Galactinol synthase 6 (GOLS6) from Arabidopsis thaliana (Mouse-ear cress).